We begin with the raw amino-acid sequence, 68 residues long: Large ribosomal subunit protein bL31 (68 aa).

It belongs to the bacterial ribosomal protein bL31 family. Type A subfamily. As to quaternary structure, part of the 50S ribosomal subunit.

In terms of biological role, binds the 23S rRNA. The protein is Large ribosomal subunit protein bL31 of Helicobacter hepaticus (strain ATCC 51449 / 3B1).